Here is a 449-residue protein sequence, read N- to C-terminus: MERRARRPRGRFYAFRRGRWNHLKRLRRRYKFRHRRRQRYRRRAFRKAFHNPRPGTYSVRLPNPQSTMTIRFQGVIFLTEGLILPKNSTAGGYADHMYGARVAKISVNLKEFLLASMNLTYVSKLGGPIAGELIADGSKSEAAENWPNCCVPLDNNVPSATPSAWWRWALMMMQPTDSCRFFNHPKQMTLQDMGRMFGGWHLFRHIETRFQLLATKNEGSFSPVASLLSQGEYLTRRDDVKYSSDHQNRWRKGGQPMTGGIAYATGKMRPDEQQYPAMPPDPPIITSTTAQGTQVRCMNSTQAWWSWDTYMSFATLTALGAQWSFPPGQRSVSRRSFNHHKARGAGDPKGQRWHTLVPLGTETITDSYMGAPASELDTNFFTLYVAQGTNKSQQYKFGTATYALKEPVMKSDSWAVVRVQSVWQLGNRQRPYPWDVNWANSTMYWGTQP.

The tract at residues 1–43 (MERRARRPRGRFYAFRRGRWNHLKRLRRRYKFRHRRRQRYRRR) is DNA-binding. The nuclear localization signals stretch occupies residues 6–47 (RRPRGRFYAFRRGRWNHLKRLRRRYKFRHRRRQRYRRRAFRK).

Belongs to the gyrovirus capsid protein family. In terms of assembly, homomultimer (Potential). Interacts with Rep; this interaction relocates Rep into the nucleus.

The protein resides in the host nucleus. It is found in the virion. Its function is as follows. Self-assembles to form the virion icosahedral capsid with a T=1 symmetry. This very small capsid (25 nm in diameter) allows the virus to be very stable in the environment and resistant to some disinfectants, including detergents. Essential for the initial attachment to host receptors. After attachment, the virus is endocytosed and traffics to the nucleus. The capsid protein binds and transports the viral genome and Rep across the nuclear envelope. The polypeptide is Capsid protein (VP1) (Chicken anemia virus (isolate Japan 82-2) (CAV)).